We begin with the raw amino-acid sequence, 332 residues long: Probable farnesyl diphosphate synthase (332 aa).

Isopentenyl diphosphate is bound by residues Lys75, Arg78, and His107. Residues Asp114 and Asp120 each contribute to the Mg(2+) site. Residue Arg125 participates in (2E)-geranyl diphosphate binding. Arg126 serves as a coordination point for isopentenyl diphosphate. Residues Lys208, Gln250, and Lys267 each contribute to the (2E)-geranyl diphosphate site.

The protein belongs to the FPP/GGPP synthase family. It depends on Mg(2+) as a cofactor.

Its subcellular location is the cytoplasm. It catalyses the reaction isopentenyl diphosphate + (2E)-geranyl diphosphate = (2E,6E)-farnesyl diphosphate + diphosphate. The sequence is that of Probable farnesyl diphosphate synthase from Sinorhizobium fredii (strain NBRC 101917 / NGR234).